The following is a 698-amino-acid chain: Polyribonucleotide nucleotidyltransferase (698 aa).

Mg(2+) is bound by residues Asp-485 and Asp-491. In terms of domain architecture, KH spans 552 to 612 (PRVEMMTIPE…SDLKGAKSIV (61 aa)). The 69-residue stretch at 622-690 (GMVYDGTVKK…KLGRLNLSYV (69 aa)) folds into the S1 motif domain.

This sequence belongs to the polyribonucleotide nucleotidyltransferase family. The cofactor is Mg(2+).

The protein resides in the cytoplasm. It catalyses the reaction RNA(n+1) + phosphate = RNA(n) + a ribonucleoside 5'-diphosphate. Functionally, involved in mRNA degradation. Catalyzes the phosphorolysis of single-stranded polyribonucleotides processively in the 3'- to 5'-direction. The sequence is that of Polyribonucleotide nucleotidyltransferase from Treponema denticola (strain ATCC 35405 / DSM 14222 / CIP 103919 / JCM 8153 / KCTC 15104).